Here is a 112-residue protein sequence, read N- to C-terminus: uncharacterized protein (112 aa).

This is an uncharacterized protein from Archaeoglobus fulgidus (strain ATCC 49558 / DSM 4304 / JCM 9628 / NBRC 100126 / VC-16).